A 432-amino-acid polypeptide reads, in one-letter code: Enolase (432 aa).

Glutamine 167 contacts (2R)-2-phosphoglycerate. Glutamate 209 (proton donor) is an active-site residue. 3 residues coordinate Mg(2+): aspartate 246, glutamate 289, and aspartate 316. Lysine 341, arginine 370, serine 371, and lysine 392 together coordinate (2R)-2-phosphoglycerate. The active-site Proton acceptor is lysine 341.

It belongs to the enolase family. Mg(2+) is required as a cofactor.

It localises to the cytoplasm. It is found in the secreted. The protein localises to the cell surface. The enzyme catalyses (2R)-2-phosphoglycerate = phosphoenolpyruvate + H2O. It participates in carbohydrate degradation; glycolysis; pyruvate from D-glyceraldehyde 3-phosphate: step 4/5. Functionally, catalyzes the reversible conversion of 2-phosphoglycerate (2-PG) into phosphoenolpyruvate (PEP). It is essential for the degradation of carbohydrates via glycolysis. This Thermotoga neapolitana (strain ATCC 49049 / DSM 4359 / NBRC 107923 / NS-E) protein is Enolase.